The chain runs to 186 residues: Probable GPI-anchored cupredoxin ARB_05732-1 (186 aa).

The N-terminal stretch at 1–18 (MVNMNILTTVALAGLAAA) is a signal peptide. Residue histidine 55 participates in Cu cation binding. An intrachain disulfide couples cysteine 66 to cysteine 104. Residue asparagine 87 is glycosylated (N-linked (GlcNAc...) asparagine). Cysteine 98 and histidine 103 together coordinate Cu cation. Residues 130–160 (GAGNGQAPSRVNNGSSGSGTPTSGGAPAATS) are disordered. N-linked (GlcNAc...) asparagine glycosylation is present at asparagine 142. Low complexity predominate over residues 143–160 (GSSGSGTPTSGGAPAATS). Glycine 153 is lipidated: GPI-anchor amidated glycine. A propeptide spans 154-186 (GAPAATSPNAASSLTFSGAAALVAMGGAWIGLL) (removed in mature form).

This sequence belongs to the multicopper oxidase family. Requires Cu cation as cofactor.

The protein resides in the cell membrane. The protein localises to the secreted. In terms of biological role, probable electron transfer copper protein that serves as a direct electron donor. The chain is Probable GPI-anchored cupredoxin ARB_05732-1 from Arthroderma benhamiae (strain ATCC MYA-4681 / CBS 112371) (Trichophyton mentagrophytes).